The primary structure comprises 301 residues: Polynucleotide kinase (301 aa).

In terms of assembly, homotetramer. Requires Mg(2+) as cofactor.

The enzyme catalyses a 5'-end dephospho-2'-deoxyribonucleoside-DNA + ATP = a 5'-end 5'-phospho-2'-deoxyribonucleoside-DNA + ADP + H(+). The catalysed reaction is a 2'-deoxyribonucleoside 3'-phosphate + H2O = a 2'-deoxyribonucleoside + phosphate. In terms of biological role, acts as a 5'-hydroxyl kinase, a 3'-phosphatase and a 2',3'-cyclic phosphodiesterase. Catalyzes the transfer of the terminal phosphate of ATP to the 5'-hydroxyl termini of ribo- and deoxyribonucleotides. In the presence of ADP the enzyme also catalyzes an exchange reaction. In the exchange reaction, an excess ADP causes the enzyme to transfer the 5' terminal phosphate from phosphorylated DNA to ADP. Involved in countering a host defense mechanism which activates T4-induced anticodon nuclease and shuts off viral translation. The polynucleotide kinase modifies the ends of nicked tRNA generated by the antiviral response of the host bacteria and facilitates repair by T4 RNA ligase. This Escherichia coli (Bacteriophage T4) protein is Polynucleotide kinase (pseT).